A 315-amino-acid chain; its full sequence is uncharacterized protein (315 aa).

Coiled coils occupy residues 184–212 (AGEE…TPEQ) and 238–275 (EEHR…YKEK).

The protein belongs to the IIV-6 287R family.

This is an uncharacterized protein from Acheta domesticus (House cricket).